Reading from the N-terminus, the 347-residue chain is NADH-ubiquinone oxidoreductase chain 2 (347 aa).

Helical transmembrane passes span methionine 1 to valine 21, histidine 25 to methionine 45, tyrosine 59 to methionine 79, threonine 96 to proline 116, isoleucine 122 to leucine 142, isoleucine 149 to glycine 169, isoleucine 178 to proline 198, leucine 200 to isoleucine 220, methionine 237 to leucine 257, aspartate 274 to methionine 294, and leucine 325 to isoleucine 345.

Belongs to the complex I subunit 2 family. In terms of assembly, core subunit of respiratory chain NADH dehydrogenase (Complex I) which is composed of 45 different subunits. Interacts with TMEM242.

The protein localises to the mitochondrion inner membrane. The enzyme catalyses a ubiquinone + NADH + 5 H(+)(in) = a ubiquinol + NAD(+) + 4 H(+)(out). In terms of biological role, core subunit of the mitochondrial membrane respiratory chain NADH dehydrogenase (Complex I) which catalyzes electron transfer from NADH through the respiratory chain, using ubiquinone as an electron acceptor. Essential for the catalytic activity and assembly of complex I. This chain is NADH-ubiquinone oxidoreductase chain 2, found in Balaenoptera physalus (Fin whale).